A 723-amino-acid chain; its full sequence is PX domain-containing protein EREL1 (723 aa).

Positions 1 to 12 are enriched in basic residues; sequence MMQRRSPPKHRH. Positions 1–26 are disordered; it reads MMQRRSPPKHRHDGTSPLPLGMDWSP. One can recognise a PX domain in the interval 48-165; sequence YCVTIPSWIV…SFLELEAAAR (118 aa). Disordered regions lie at residues 169 to 193 and 209 to 230; these read QDVD…MVHP and YGSD…QDDI. Residues 172–193 are compositionally biased toward low complexity; that stretch reads DQNASDSNNDRSSTSSSPMVHP. Residues 209–225 are compositionally biased toward polar residues; that stretch reads YGSDTAYETSEVGSPSV. Coiled-coil stretches lie at residues 401–474 and 503–555; these read NERL…LRQK and KHVL…LEKE. The segment at 698–723 is disordered; that stretch reads DVKTTEDVNEENSDEKDEASRETLKR. The span at 704–714 shows a compositional bias: acidic residues; it reads DVNEENSDEKD.

The protein resides in the cytoplasm. Its subcellular location is the cytosol. It is found in the endosome membrane. Acts as an effector of RABF2A and RABF2B. Involved in vacuolar transport of storage proteins. Regulates membrane trafficking to protein storage vacuoles (PSVs). Binds specifically to phosphatidylinositol 3-monophosphate (PtdIns3P). The polypeptide is PX domain-containing protein EREL1 (Arabidopsis thaliana (Mouse-ear cress)).